Consider the following 735-residue polypeptide: Ribosomal protein S6 kinase alpha-1 (735 aa).

Ser54 is modified (phosphoserine). Residues 62–321 (FELLKVLGQG…AEEIKRHIFY (260 aa)) enclose the Protein kinase 1 domain. ATP-binding positions include 68 to 76 (LGQGSFGKV) and Lys94. The active-site Proton acceptor is the Asp187. At Ser221 the chain carries Phosphoserine; by PDPK1. At Ser307 the chain carries Phosphoserine. The region spanning 322–391 (STIDWNKLYR…VATGLMEDDS (70 aa)) is the AGC-kinase C-terminal domain. Thr359 carries the phosphothreonine modification. The residue at position 363 (Ser363) is a Phosphoserine. A phosphoserine; by autocatalysis mark is found at Ser369 and Ser380. The Protein kinase 2 domain occupies 418–675 (YIVKETIGVG…AKQVLQHPWI (258 aa)). Residues 424–432 (IGVGSYSVC) and Lys447 each bind ATP. Asp535 serves as the catalytic Proton acceptor. Thr573 is subject to Phosphothreonine. Ser732 carries the phosphoserine modification.

Belongs to the protein kinase superfamily. AGC Ser/Thr protein kinase family. S6 kinase subfamily. In terms of assembly, forms a complex with either MAPK1/ERK2 or MAPK3/ERK1 in quiescent cells. Transiently dissociates following mitogenic stimulation. Interacts with ETV1/ER81 and FGFR1. Requires Mg(2+) as cofactor. In terms of processing, activated by phosphorylation at Ser-221 by PDPK1. Autophosphorylated on Ser-380, as part of the activation process. May be phosphorylated at Thr-359 and Ser-363 by MAPK1/ERK2 and MAPK3/ERK1. N-terminal myristoylation results in an activated kinase in the absence of added growth factors.

It localises to the nucleus. The protein localises to the cytoplasm. It carries out the reaction L-seryl-[protein] + ATP = O-phospho-L-seryl-[protein] + ADP + H(+). The catalysed reaction is L-threonyl-[protein] + ATP = O-phospho-L-threonyl-[protein] + ADP + H(+). Upon extracellular signal or mitogen stimulation, phosphorylated at Thr-573 in the C-terminal kinase domain (CTKD) by MAPK1/ERK2 and MAPK3/ERK1. The activated CTKD then autophosphorylates Ser-380, allowing binding of PDPK1, which in turn phosphorylates Ser-221 in the N-terminal kinase domain (NTDK) leading to the full activation of the protein and subsequent phosphorylation of the substrates by the NTKD. Functionally, serine/threonine-protein kinase that acts downstream of ERK (MAPK1/ERK2 and MAPK3/ERK1) signaling and mediates mitogenic and stress-induced activation of the transcription factors CREB1, ETV1/ER81 and NR4A1/NUR77, regulates translation through RPS6 and EIF4B phosphorylation, and mediates cellular proliferation, survival, and differentiation by modulating mTOR signaling and repressing pro-apoptotic function of BAD and DAPK1. In fibroblast, is required for EGF-stimulated phosphorylation of CREB1, which results in the subsequent transcriptional activation of several immediate-early genes. In response to mitogenic stimulation (EGF and PMA), phosphorylates and activates NR4A1/NUR77 and ETV1/ER81 transcription factors and the cofactor CREBBP. Upon insulin-derived signal, acts indirectly on the transcription regulation of several genes by phosphorylating GSK3B at 'Ser-9' and inhibiting its activity. Phosphorylates RPS6 in response to serum or EGF via an mTOR-independent mechanism and promotes translation initiation by facilitating assembly of the pre-initiation complex. In response to insulin, phosphorylates EIF4B, enhancing EIF4B affinity for the EIF3 complex and stimulating cap-dependent translation. Is involved in the mTOR nutrient-sensing pathway by directly phosphorylating TSC2 at 'Ser-1798', which potently inhibits TSC2 ability to suppress mTOR signaling, and mediates phosphorylation of RPTOR, which regulates mTORC1 activity and may promote rapamycin-sensitive signaling independently of the PI3K/AKT pathway. Also involved in feedback regulation of mTORC1 and mTORC2 by phosphorylating DEPTOR. Mediates cell survival by phosphorylating the pro-apoptotic proteins BAD and DAPK1 and suppressing their pro-apoptotic function. Promotes the survival of hepatic stellate cells by phosphorylating CEBPB in response to the hepatotoxin carbon tetrachloride (CCl4). Mediates induction of hepatocyte prolifration by TGFA through phosphorylation of CEBPB. Is involved in cell cycle regulation by phosphorylating the CDK inhibitor CDKN1B, which promotes CDKN1B association with 14-3-3 proteins and prevents its translocation to the nucleus and inhibition of G1 progression. Phosphorylates EPHA2 at 'Ser-897', the RPS6KA-EPHA2 signaling pathway controls cell migration. In response to mTORC1 activation, phosphorylates EIF4B at 'Ser-406' and 'Ser-422' which stimulates bicarbonate cotransporter SLC4A7 mRNA translation, increasing SLC4A7 protein abundance and function. The protein is Ribosomal protein S6 kinase alpha-1 (Rps6ka1) of Rattus norvegicus (Rat).